The following is a 186-amino-acid chain: MAVARAGVLGVQWLQRASWNVMPLGARTASHMTKDMFPGPYPRTPEERAAAAKKYNMRVEDYEPYPDDGMGYGDYPKLPDRSQHERDPWYSWDQPDLRLNWGEPMHWHLDMFNRNRVDTSPILVSWNVMCMQLFGFLAFMIFMCWVGEVYPVYQPVGPKQYPYNNLYLERGGDPSKEPERVVHYEI.

The transit peptide at 1-28 (MAVARAGVLGVQWLQRASWNVMPLGART) directs the protein to the mitochondrion. A helical transmembrane segment spans residues 133 to 153 (LFGFLAFMIFMCWVGEVYPVY).

This sequence belongs to the complex I NDUFB8 subunit family. As to quaternary structure, complex I is composed of 45 different subunits.

It localises to the mitochondrion inner membrane. In terms of biological role, accessory subunit of the mitochondrial membrane respiratory chain NADH dehydrogenase (Complex I), that is believed not to be involved in catalysis. Complex I functions in the transfer of electrons from NADH to the respiratory chain. The immediate electron acceptor for the enzyme is believed to be ubiquinone. The protein is NADH dehydrogenase [ubiquinone] 1 beta subcomplex subunit 8, mitochondrial (NDUFB8) of Pongo abelii (Sumatran orangutan).